A 351-amino-acid chain; its full sequence is Nicotinate-nucleotide--dimethylbenzimidazole phosphoribosyltransferase (351 aa).

E317 serves as the catalytic Proton acceptor.

It belongs to the CobT family.

The catalysed reaction is 5,6-dimethylbenzimidazole + nicotinate beta-D-ribonucleotide = alpha-ribazole 5'-phosphate + nicotinate + H(+). It functions in the pathway nucleoside biosynthesis; alpha-ribazole biosynthesis; alpha-ribazole from 5,6-dimethylbenzimidazole: step 1/2. Its function is as follows. Catalyzes the synthesis of alpha-ribazole-5'-phosphate from nicotinate mononucleotide (NAMN) and 5,6-dimethylbenzimidazole (DMB). In Pseudomonas aeruginosa (strain LESB58), this protein is Nicotinate-nucleotide--dimethylbenzimidazole phosphoribosyltransferase.